A 318-amino-acid polypeptide reads, in one-letter code: Transaldolase (318 aa).

Lys-126 (schiff-base intermediate with substrate) is an active-site residue.

It belongs to the transaldolase family. Type 1 subfamily. In terms of assembly, homodimer.

The protein localises to the cytoplasm. The enzyme catalyses D-sedoheptulose 7-phosphate + D-glyceraldehyde 3-phosphate = D-erythrose 4-phosphate + beta-D-fructose 6-phosphate. It functions in the pathway carbohydrate degradation; pentose phosphate pathway; D-glyceraldehyde 3-phosphate and beta-D-fructose 6-phosphate from D-ribose 5-phosphate and D-xylulose 5-phosphate (non-oxidative stage): step 2/3. Its function is as follows. Transaldolase is important for the balance of metabolites in the pentose-phosphate pathway. The polypeptide is Transaldolase (Cupriavidus necator (strain ATCC 17699 / DSM 428 / KCTC 22496 / NCIMB 10442 / H16 / Stanier 337) (Ralstonia eutropha)).